A 403-amino-acid polypeptide reads, in one-letter code: Ribosomal RNA large subunit methyltransferase I (403 aa).

A PUA domain is found at 9–88 (YPRLVLSKGR…EPVDIAFFTR (80 aa)).

This sequence belongs to the methyltransferase superfamily. RlmI family.

The protein localises to the cytoplasm. It catalyses the reaction cytidine(1962) in 23S rRNA + S-adenosyl-L-methionine = 5-methylcytidine(1962) in 23S rRNA + S-adenosyl-L-homocysteine + H(+). Functionally, specifically methylates the cytosine at position 1962 (m5C1962) of 23S rRNA. This Salmonella arizonae (strain ATCC BAA-731 / CDC346-86 / RSK2980) protein is Ribosomal RNA large subunit methyltransferase I.